The primary structure comprises 222 residues: Small ribosomal subunit protein eS1 (222 aa).

The protein belongs to the eukaryotic ribosomal protein eS1 family.

In Pyrobaculum islandicum (strain DSM 4184 / JCM 9189 / GEO3), this protein is Small ribosomal subunit protein eS1.